We begin with the raw amino-acid sequence, 158 residues long: Transcriptional repressor NrdR (158 aa).

The segment at Cys3–Cys34 is a zinc-finger region. In terms of domain architecture, ATP-cone spans Ile49 to Asp139.

Belongs to the NrdR family. It depends on Zn(2+) as a cofactor.

Functionally, negatively regulates transcription of bacterial ribonucleotide reductase nrd genes and operons by binding to NrdR-boxes. This is Transcriptional repressor NrdR from Synechococcus sp. (strain CC9902).